A 408-amino-acid chain; its full sequence is tRNA-specific 2-thiouridylase MnmA (408 aa).

Residues 27-34 (AMSGGVDS) and L53 contribute to the ATP site. Residue C121 is the Nucleophile of the active site. C121 and C222 form a disulfide bridge. ATP is bound at residue G145. Positions 172–174 (RDQ) are interaction with tRNA. C222 serves as the catalytic Cysteine persulfide intermediate.

This sequence belongs to the MnmA/TRMU family.

The protein resides in the cytoplasm. It carries out the reaction S-sulfanyl-L-cysteinyl-[protein] + uridine(34) in tRNA + AH2 + ATP = 2-thiouridine(34) in tRNA + L-cysteinyl-[protein] + A + AMP + diphosphate + H(+). In terms of biological role, catalyzes the 2-thiolation of uridine at the wobble position (U34) of tRNA, leading to the formation of s(2)U34. The chain is tRNA-specific 2-thiouridylase MnmA from Rhizobium etli (strain CIAT 652).